A 459-amino-acid chain; its full sequence is Vacuolar cation/proton exchanger 3 (459 aa).

The Cytoplasmic portion of the chain corresponds to 1–67 (MGSIVEPWAA…TLKNILSNLQ (67 aa)). Residues 68–88 (EVILGTKLTLLFLAIPLAILA) form a helical membrane-spanning segment. Residues 89–95 (NSYNYGR) are Extracellular-facing. The helical transmembrane segment at 96 to 116 (PLIFGLSLIGLTPLAERVSFL) threads the bilayer. Residues 117-129 (TEQLAFYTGPTVG) are Cytoplasmic-facing. Residues 130–150 (GLLNATCGNATELIIAILALA) form a helical membrane-spanning segment. The segment at 137 to 172 (GNATELIIAILALANNKVAVVKYSLLGSILSNLLLV) is cation selection. Over 151–161 (NNKVAVVKYSL) the chain is Extracellular. A helical transmembrane segment spans residues 162–182 (LGSILSNLLLVLGTSLFFGGI). Topologically, residues 183–195 (ANIRREQRFDRKQ) are cytoplasmic. A helical transmembrane segment spans residues 196-216 (ADVNFFLLLMGLLCHLLPLLL). The Extracellular portion of the chain corresponds to 217–238 (KYAATGEVSTSMINKMSLTLSR). A helical transmembrane segment spans residues 239–259 (TSSIVMLIAYIAYLIFQLWTH). The Cytoplasmic portion of the chain corresponds to 260–283 (RQLFEAQQDDDDAYDDEVSVEETP). A helical membrane pass occupies residues 284 to 304 (VIGFWSGFAWLVGMTIVIALL). The Extracellular segment spans residues 305–327 (SEYVVDTIEDASDSWGLSVSFIS). The helical transmembrane segment at 328–348 (IILLPIVGNAAEHAGAIIFAF) threads the bilayer. Positions 335–370 (GNAAEHAGAIIFAFKNKLDISLGVALGSATQISLFV) are cation selection. The Cytoplasmic segment spans residues 349-362 (KNKLDISLGVALGS). The chain crosses the membrane as a helical span at residues 363-383 (ATQISLFVVPLSVIVAWILGI). Residues 384 to 386 (KMD) lie on the Extracellular side of the membrane. Residues 387 to 407 (LNFNILETSSLALAIIITAFT) traverse the membrane as a helical segment. At 408 to 417 (LQDGTSHYMK) the chain is on the cytoplasmic side. Residues 418–438 (GLVLLLCYVIIAACFFVDQIP) form a helical membrane-spanning segment. The Extracellular segment spans residues 439-459 (QPNDLDVGLQPMNNLGEVFSA).

It belongs to the Ca(2+):cation antiporter (CaCA) (TC 2.A.19) family. Cation/proton exchanger (CAX) subfamily. In terms of tissue distribution, expressed in roots, stems and flowers.

It localises to the vacuole membrane. Its activity is regulated as follows. Inhibited by excess of Ca(2+). Its function is as follows. Vacuolar cation/proton exchanger (CAX). Translocates Ca(2+) and other metal ions into vacuoles using the proton gradient formed by H(+)-ATPase and H(+)-pyrophosphatase. Involved in ion homeostasis in association with CAX1. The sequence is that of Vacuolar cation/proton exchanger 3 (CAX3) from Arabidopsis thaliana (Mouse-ear cress).